The following is a 172-amino-acid chain: Small ribosomal subunit protein uS5 (172 aa).

The S5 DRBM domain maps to 17-80 (LREKMISVNR…EQARRNMFKV (64 aa)).

This sequence belongs to the universal ribosomal protein uS5 family. Part of the 30S ribosomal subunit. Contacts proteins S4 and S8.

With S4 and S12 plays an important role in translational accuracy. Functionally, located at the back of the 30S subunit body where it stabilizes the conformation of the head with respect to the body. This chain is Small ribosomal subunit protein uS5, found in Paraburkholderia phytofirmans (strain DSM 17436 / LMG 22146 / PsJN) (Burkholderia phytofirmans).